The sequence spans 479 residues: Ribosomal RNA small subunit methyltransferase F (479 aa).

S-adenosyl-L-methionine-binding positions include 125-131, Glu-149, Asp-176, and Asp-194; that span reads AAAPGSK. Cys-247 serves as the catalytic Nucleophile.

It belongs to the class I-like SAM-binding methyltransferase superfamily. RsmB/NOP family.

The protein localises to the cytoplasm. The enzyme catalyses cytidine(1407) in 16S rRNA + S-adenosyl-L-methionine = 5-methylcytidine(1407) in 16S rRNA + S-adenosyl-L-homocysteine + H(+). Functionally, specifically methylates the cytosine at position 1407 (m5C1407) of 16S rRNA. This chain is Ribosomal RNA small subunit methyltransferase F, found in Escherichia fergusonii (strain ATCC 35469 / DSM 13698 / CCUG 18766 / IAM 14443 / JCM 21226 / LMG 7866 / NBRC 102419 / NCTC 12128 / CDC 0568-73).